The sequence spans 363 residues: tRNA N6-adenosine threonylcarbamoyltransferase (363 aa).

2 residues coordinate Fe cation: H121 and H125. Residues 143-147 (LASGG), D176, G189, and N287 contribute to the substrate site. D315 contributes to the Fe cation binding site.

It belongs to the KAE1 / TsaD family. The cofactor is Fe(2+).

Its subcellular location is the cytoplasm. It catalyses the reaction L-threonylcarbamoyladenylate + adenosine(37) in tRNA = N(6)-L-threonylcarbamoyladenosine(37) in tRNA + AMP + H(+). Required for the formation of a threonylcarbamoyl group on adenosine at position 37 (t(6)A37) in tRNAs that read codons beginning with adenine. Is involved in the transfer of the threonylcarbamoyl moiety of threonylcarbamoyl-AMP (TC-AMP) to the N6 group of A37, together with TsaE and TsaB. TsaD likely plays a direct catalytic role in this reaction. In Rhodopseudomonas palustris (strain BisB5), this protein is tRNA N6-adenosine threonylcarbamoyltransferase.